A 68-amino-acid polypeptide reads, in one-letter code: ATP synthase F(0) complex subunit 8 (68 aa).

The helical transmembrane segment at 8–21 (VWPTMITPMLLTLF) threads the bilayer. N6-acetyllysine; alternate is present on K54. K54 is subject to N6-succinyllysine; alternate. K57 carries the post-translational modification N6-acetyllysine.

The protein belongs to the ATPase protein 8 family. Component of the ATP synthase complex composed at least of ATP5F1A/subunit alpha, ATP5F1B/subunit beta, ATP5MC1/subunit c (homooctomer), MT-ATP6/subunit a, MT-ATP8/subunit 8, ATP5ME/subunit e, ATP5MF/subunit f, ATP5MG/subunit g, ATP5MK/subunit k, ATP5MJ/subunit j, ATP5F1C/subunit gamma, ATP5F1D/subunit delta, ATP5F1E/subunit epsilon, ATP5PF/subunit F6, ATP5PB/subunit b, ATP5PD/subunit d, ATP5PO/subunit OSCP. ATP synthase complex consists of a soluble F(1) head domain (subunits alpha(3) and beta(3)) - the catalytic core - and a membrane F(0) domain - the membrane proton channel (subunits c, a, 8, e, f, g, k and j). These two domains are linked by a central stalk (subunits gamma, delta, and epsilon) rotating inside the F1 region and a stationary peripheral stalk (subunits F6, b, d, and OSCP). Interacts with PRICKLE3.

It localises to the mitochondrion membrane. Its function is as follows. Subunit 8, of the mitochondrial membrane ATP synthase complex (F(1)F(0) ATP synthase or Complex V) that produces ATP from ADP in the presence of a proton gradient across the membrane which is generated by electron transport complexes of the respiratory chain. ATP synthase complex consist of a soluble F(1) head domain - the catalytic core - and a membrane F(1) domain - the membrane proton channel. These two domains are linked by a central stalk rotating inside the F(1) region and a stationary peripheral stalk. During catalysis, ATP synthesis in the catalytic domain of F(1) is coupled via a rotary mechanism of the central stalk subunits to proton translocation. In vivo, can only synthesize ATP although its ATP hydrolase activity can be activated artificially in vitro. Part of the complex F(0) domain. This is ATP synthase F(0) complex subunit 8 from Homo sapiens (Human).